A 155-amino-acid polypeptide reads, in one-letter code: Small ribosomal subunit protein uS7 (155 aa).

Belongs to the universal ribosomal protein uS7 family. In terms of assembly, part of the 30S ribosomal subunit. Contacts proteins S9 and S11.

One of the primary rRNA binding proteins, it binds directly to 16S rRNA where it nucleates assembly of the head domain of the 30S subunit. Is located at the subunit interface close to the decoding center, probably blocks exit of the E-site tRNA. This is Small ribosomal subunit protein uS7 from Prosthecochloris aestuarii (strain DSM 271 / SK 413).